Here is an 80-residue protein sequence, read N- to C-terminus: Conotoxin Vi6.2 (80 aa).

Positions 1–22 are cleaved as a signal peptide; sequence MKLTCVLITTVLFLTASQLITA. Residues 23-47 constitute a propeptide that is removed on maturation; that stretch reads DYSRDKRQYRAVRLRDEMRNFKGAR. Cystine bridges form between Cys-49–Cys-62, Cys-56–Cys-67, and Cys-61–Cys-77. A 4-hydroxyproline mark is found at Pro-60 and Pro-63.

This sequence belongs to the conotoxin O1 superfamily. In terms of tissue distribution, expressed by the venom duct.

Its subcellular location is the secreted. Ion channel inhibitor that inhibits the increase in intracellular calcium upon depolarization in DRG neurons. In vivo, both intraperitoneal and intracranial injections into mice induce hyperactivity. The polypeptide is Conotoxin Vi6.2 (Conus virgo (Virgin cone)).